Here is a 294-residue protein sequence, read N- to C-terminus: Ribosomal RNA small subunit methyltransferase I (294 aa).

Belongs to the methyltransferase superfamily. RsmI family.

The protein localises to the cytoplasm. The catalysed reaction is cytidine(1402) in 16S rRNA + S-adenosyl-L-methionine = 2'-O-methylcytidine(1402) in 16S rRNA + S-adenosyl-L-homocysteine + H(+). In terms of biological role, catalyzes the 2'-O-methylation of the ribose of cytidine 1402 (C1402) in 16S rRNA. The protein is Ribosomal RNA small subunit methyltransferase I of Mesorhizobium japonicum (strain LMG 29417 / CECT 9101 / MAFF 303099) (Mesorhizobium loti (strain MAFF 303099)).